Reading from the N-terminus, the 637-residue chain is Chaperone protein HtpG (637 aa).

An a; substrate-binding region spans residues 1–335 (MQGTVNSERL…SSDLPLNISR (335 aa)). The tract at residues 336–559 (ETLQNNKIIE…DGSMDIRMER (224 aa)) is b. Residues 560–637 (FLREQKQLNY…RMNNVLSQIN (78 aa)) are c.

It belongs to the heat shock protein 90 family. Homodimer.

It is found in the cytoplasm. Functionally, molecular chaperone. Has ATPase activity. This Ehrlichia ruminantium (strain Welgevonden) protein is Chaperone protein HtpG.